The primary structure comprises 451 residues: Tubulin gamma-2 chain (451 aa).

Residue serine 131 is modified to Phosphoserine; by BRSK1. 142 to 148 lines the GTP pocket; sequence AGGTGSG.

It belongs to the tubulin family. In terms of assembly, component of the gamma-tubulin ring complex (gTuRC) consisting of TUBGCP2, TUBGCP3, TUBGCP4, TUBGCP5 and TUBGCP6 and gamma-tubulin TUBG1 or TUBG2. TUBGCP2, TUBGCP3, TUBGCP4, TUBGCP5 and TUBGCP6 assemble in a 5:5:2:1:1 stoichiometry; each is associated with a gamma-tubulin, thereby arranging 14 gamma-tubulins in a helical manner. Gamma-tubulin at the first position is blocked by TUBGCP3 at the last position, allowing 13 protafilaments to grow into a microtubule. Interacts with alpha-beta tubulin heterodimers; the interaction allows microtubules to nucleate from the gTuRC. In terms of processing, phosphorylation at Ser-131 by BRSK1 regulates centrosome duplication, possibly by mediating relocation of gamma-tubulin and its associated proteins from the cytoplasm to the centrosome.

Its subcellular location is the cytoplasm. The protein localises to the cytoskeleton. The protein resides in the microtubule organizing center. It is found in the centrosome. Tubulin is the major constituent of microtubules, protein filaments consisting of alpha- and beta-tubulin heterodimers. Gamma-tubulin is a key component of the gamma-tubulin ring complex (gTuRC) which mediates microtubule nucleation. The gTuRC regulates the minus-end nucleation of alpha-beta tubulin heterodimers that grow into microtubule protafilaments, a critical step in centrosome duplication and spindle formation. The protein is Tubulin gamma-2 chain (Tubg2) of Mus musculus (Mouse).